A 555-amino-acid polypeptide reads, in one-letter code: CTP synthase (555 aa).

The interval 1 to 265 (MTRYIFITGG…GNRVCEKLNI (265 aa)) is amidoligase domain. Serine 13 is a binding site for CTP. Serine 13 lines the UTP pocket. ATP is bound by residues 14-19 (SLGKGI) and aspartate 71. Mg(2+) is bound by residues aspartate 71 and glutamate 139. CTP-binding positions include 146 to 148 (DIE), 186 to 191 (KTKPTQ), and lysine 222. UTP contacts are provided by residues 186 to 191 (KTKPTQ) and lysine 222. In terms of domain architecture, Glutamine amidotransferase type-1 spans 290–541 (TVAVVGKYVD…IKAGLAAKEA (252 aa)). Glycine 351 is an L-glutamine binding site. Cysteine 378 serves as the catalytic Nucleophile; for glutamine hydrolysis. L-glutamine contacts are provided by residues 379-382 (LGMQ), glutamate 402, and arginine 469. Residues histidine 514 and glutamate 516 contribute to the active site.

It belongs to the CTP synthase family. As to quaternary structure, homotetramer.

It carries out the reaction UTP + L-glutamine + ATP + H2O = CTP + L-glutamate + ADP + phosphate + 2 H(+). It catalyses the reaction L-glutamine + H2O = L-glutamate + NH4(+). The catalysed reaction is UTP + NH4(+) + ATP = CTP + ADP + phosphate + 2 H(+). It functions in the pathway pyrimidine metabolism; CTP biosynthesis via de novo pathway; CTP from UDP: step 2/2. With respect to regulation, allosterically activated by GTP, when glutamine is the substrate; GTP has no effect on the reaction when ammonia is the substrate. The allosteric effector GTP functions by stabilizing the protein conformation that binds the tetrahedral intermediate(s) formed during glutamine hydrolysis. Inhibited by the product CTP, via allosteric rather than competitive inhibition. Its function is as follows. Catalyzes the ATP-dependent amination of UTP to CTP with either L-glutamine or ammonia as the source of nitrogen. Regulates intracellular CTP levels through interactions with the four ribonucleotide triphosphates. This is CTP synthase from Coxiella burnetii (strain RSA 331 / Henzerling II).